The following is a 131-amino-acid chain: Large-conductance mechanosensitive channel (131 aa).

Transmembrane regions (helical) follow at residues 8 to 28 (FAVR…GAFG), 30 to 50 (IVSS…LGGI), and 67 to 87 (GAFL…FLFV).

This sequence belongs to the MscL family. As to quaternary structure, homopentamer.

It is found in the cell membrane. Its function is as follows. Channel that opens in response to stretch forces in the membrane lipid bilayer. May participate in the regulation of osmotic pressure changes within the cell. In Anoxybacillus flavithermus (strain DSM 21510 / WK1), this protein is Large-conductance mechanosensitive channel.